The chain runs to 389 residues: Lipid-A-disaccharide synthase (389 aa).

Belongs to the LpxB family.

It catalyses the reaction a lipid X + a UDP-2-N,3-O-bis[(3R)-3-hydroxyacyl]-alpha-D-glucosamine = a lipid A disaccharide + UDP + H(+). It functions in the pathway bacterial outer membrane biogenesis; LPS lipid A biosynthesis. In terms of biological role, condensation of UDP-2,3-diacylglucosamine and 2,3-diacylglucosamine-1-phosphate to form lipid A disaccharide, a precursor of lipid A, a phosphorylated glycolipid that anchors the lipopolysaccharide to the outer membrane of the cell. The protein is Lipid-A-disaccharide synthase of Burkholderia cenocepacia (strain HI2424).